The chain runs to 66 residues: Large ribosomal subunit protein uL29 (66 aa).

It belongs to the universal ribosomal protein uL29 family.

The polypeptide is Large ribosomal subunit protein uL29 (Geobacillus kaustophilus (strain HTA426)).